A 309-amino-acid polypeptide reads, in one-letter code: Bombesin receptor-activated protein C6orf89 homolog (309 aa).

At 1–59 (MGSSLSEPCIYDKLSESIDILRQSGYRYGMSEREIEKFIKQVLETNEPRREPPQFPILR) the chain is on the cytoplasmic side. The chain crosses the membrane as a helical span at residues 60-80 (ATVKFVVAVGVVLMAVLVFTY). At 81-309 (PQSPVLMGSV…QDVQCDSAVL (229 aa)) the chain is on the extracellular side.

In terms of assembly, homodimer.

It is found in the golgi apparatus membrane. The protein resides in the cytoplasm. Functionally, exhibits histone deacetylase (HDAC) enhancer properties. May play a role in progression through the cell cycle. The protein is Bombesin receptor-activated protein C6orf89 homolog of Danio rerio (Zebrafish).